The primary structure comprises 302 residues: 33 kDa chaperonin (302 aa).

2 disulfides stabilise this stretch: C234-C236 and C267-C270.

This sequence belongs to the HSP33 family. Under oxidizing conditions two disulfide bonds are formed involving the reactive cysteines. Under reducing conditions zinc is bound to the reactive cysteines and the protein is inactive.

It localises to the cytoplasm. Redox regulated molecular chaperone. Protects both thermally unfolding and oxidatively damaged proteins from irreversible aggregation. Plays an important role in the bacterial defense system toward oxidative stress. The sequence is that of 33 kDa chaperonin from Neisseria meningitidis serogroup A / serotype 4A (strain DSM 15465 / Z2491).